The primary structure comprises 315 residues: 4-hydroxy-3-methylbut-2-enyl diphosphate reductase (315 aa).

Cys-12 is a [4Fe-4S] cluster binding site. Residues His-41 and His-74 each contribute to the (2E)-4-hydroxy-3-methylbut-2-enyl diphosphate site. 2 residues coordinate dimethylallyl diphosphate: His-41 and His-74. Residues His-41 and His-74 each coordinate isopentenyl diphosphate. Cys-96 is a [4Fe-4S] cluster binding site. A (2E)-4-hydroxy-3-methylbut-2-enyl diphosphate-binding site is contributed by His-124. A dimethylallyl diphosphate-binding site is contributed by His-124. His-124 lines the isopentenyl diphosphate pocket. Glu-126 functions as the Proton donor in the catalytic mechanism. Position 168 (Thr-168) interacts with (2E)-4-hydroxy-3-methylbut-2-enyl diphosphate. Cys-198 contacts [4Fe-4S] cluster. Residues Ser-226, Ser-227, Asn-228, and Ser-270 each coordinate (2E)-4-hydroxy-3-methylbut-2-enyl diphosphate. Residues Ser-226, Ser-227, Asn-228, and Ser-270 each coordinate dimethylallyl diphosphate. The isopentenyl diphosphate site is built by Ser-226, Ser-227, Asn-228, and Ser-270.

It belongs to the IspH family. [4Fe-4S] cluster serves as cofactor.

It carries out the reaction isopentenyl diphosphate + 2 oxidized [2Fe-2S]-[ferredoxin] + H2O = (2E)-4-hydroxy-3-methylbut-2-enyl diphosphate + 2 reduced [2Fe-2S]-[ferredoxin] + 2 H(+). The catalysed reaction is dimethylallyl diphosphate + 2 oxidized [2Fe-2S]-[ferredoxin] + H2O = (2E)-4-hydroxy-3-methylbut-2-enyl diphosphate + 2 reduced [2Fe-2S]-[ferredoxin] + 2 H(+). Its pathway is isoprenoid biosynthesis; dimethylallyl diphosphate biosynthesis; dimethylallyl diphosphate from (2E)-4-hydroxy-3-methylbutenyl diphosphate: step 1/1. It participates in isoprenoid biosynthesis; isopentenyl diphosphate biosynthesis via DXP pathway; isopentenyl diphosphate from 1-deoxy-D-xylulose 5-phosphate: step 6/6. Its function is as follows. Catalyzes the conversion of 1-hydroxy-2-methyl-2-(E)-butenyl 4-diphosphate (HMBPP) into a mixture of isopentenyl diphosphate (IPP) and dimethylallyl diphosphate (DMAPP). Acts in the terminal step of the DOXP/MEP pathway for isoprenoid precursor biosynthesis. This Pseudomonas putida (strain ATCC 700007 / DSM 6899 / JCM 31910 / BCRC 17059 / LMG 24140 / F1) protein is 4-hydroxy-3-methylbut-2-enyl diphosphate reductase.